Consider the following 449-residue polypeptide: UDP-N-acetylglucosamine 1-carboxyvinyltransferase (449 aa).

51–52 (KN) contributes to the phosphoenolpyruvate binding site. A UDP-N-acetyl-alpha-D-glucosamine-binding site is contributed by Arg121. Cys145 functions as the Proton donor in the catalytic mechanism. Cys145 is modified (2-(S-cysteinyl)pyruvic acid O-phosphothioketal). UDP-N-acetyl-alpha-D-glucosamine contacts are provided by residues 150–154 (RPVDQ), Asp333, and Ile355.

The protein belongs to the EPSP synthase family. MurA subfamily.

It localises to the cytoplasm. The catalysed reaction is phosphoenolpyruvate + UDP-N-acetyl-alpha-D-glucosamine = UDP-N-acetyl-3-O-(1-carboxyvinyl)-alpha-D-glucosamine + phosphate. It participates in cell wall biogenesis; peptidoglycan biosynthesis. Its function is as follows. Cell wall formation. Adds enolpyruvyl to UDP-N-acetylglucosamine. The sequence is that of UDP-N-acetylglucosamine 1-carboxyvinyltransferase from Burkholderia lata (strain ATCC 17760 / DSM 23089 / LMG 22485 / NCIMB 9086 / R18194 / 383).